Consider the following 501-residue polypeptide: Probable cytosol aminopeptidase (501 aa).

The Mn(2+) site is built by Lys268 and Asp273. Residue Lys280 is part of the active site. Asp291, Asp350, and Glu352 together coordinate Mn(2+). Arg354 is a catalytic residue.

The protein belongs to the peptidase M17 family. It depends on Mn(2+) as a cofactor.

Its subcellular location is the cytoplasm. It carries out the reaction Release of an N-terminal amino acid, Xaa-|-Yaa-, in which Xaa is preferably Leu, but may be other amino acids including Pro although not Arg or Lys, and Yaa may be Pro. Amino acid amides and methyl esters are also readily hydrolyzed, but rates on arylamides are exceedingly low.. The enzyme catalyses Release of an N-terminal amino acid, preferentially leucine, but not glutamic or aspartic acids.. In terms of biological role, presumably involved in the processing and regular turnover of intracellular proteins. Catalyzes the removal of unsubstituted N-terminal amino acids from various peptides. The chain is Probable cytosol aminopeptidase from Pseudoalteromonas atlantica (strain T6c / ATCC BAA-1087).